The sequence spans 367 residues: Cellular tumor antigen p53 (367 aa).

Residues 1 to 47 form a transcription activation (acidic) region; the sequence is MEEENISLPLSQDTFQDLWDNVSAPPISTIQTAALENEAWPAERQMN. Residues 86–273 mediate DNA binding; it reads DYPGEYGFKL…KTEETNSTKM (188 aa). Zn(2+) contacts are provided by Cys-160, His-163, Cys-219, and Cys-223. The segment at 254–261 is interaction with DNA; sequence RVCACPGR. The segment covering 262–279 has biased composition (basic and acidic residues); it reads DRKTEETNSTKMQNDAKD. 2 disordered regions span residues 262–306 and 332–367; these read DRKT…AEED and DLLE…SDSD. Positions 282–300 match the Bipartite nuclear localization signal motif; sequence KRKSVPTPDSTTIKKSKTA. The span at 291–302 shows a compositional bias: low complexity; it reads STTIKKSKTASS. The segment at 308-337 is oligomerization; the sequence is NEVYTLQIRGRKRYEMLKKINDGLDLLENK. The short motif at 322–333 is the Nuclear export signal element; sequence EMLKKINDGLDL. The segment at 342 to 363 is basic (repression of DNA-binding); that stretch reads ATHRPDGPIPPSGKRLLHRGEK.

This sequence belongs to the p53 family. In terms of assembly, binds DNA as a homotetramer. The cofactor is Zn(2+).

The protein resides in the cytoplasm. It is found in the nucleus. In terms of biological role, multifunctional transcription factor that induces cell cycle arrest, DNA repair or apoptosis upon binding to its target DNA sequence. Acts as a tumor suppressor in many tumor types; induces growth arrest or apoptosis depending on the physiological circumstances and cell type. Negatively regulates cell division by controlling expression of a set of genes required for this process. One of the activated genes is an inhibitor of cyclin-dependent kinases. Apoptosis induction seems to be mediated either by stimulation of BAX and FAS antigen expression, or by repression of Bcl-2 expression. This is Cellular tumor antigen p53 (tp53) from Tetraodon miurus (Congo puffer).